Reading from the N-terminus, the 264-residue chain is MKKLKLHGFNNLTKSLSFCIYDICYAKTAEERDGYIAYIDELYNANRLTEILSETCSIIGANILNIARQDYEPQGASVTILVSEEPVDPKLIDKTEHPGPLPETVVAHLDKSHICVHTYPESHPEGGLCTFRADIEVSTCGVISPLKALNYLIHQLESDIVTIDYRVRGFTRDINGMKHFIDHEINSIQNFMSDGMKALYDMVDVNVYQENIFHTKMLLKEFDLKHYMFHTKPEDLTDSERQEITAALWKEMREIYYGRNMPAV.

Ser112 serves as the catalytic Schiff-base intermediate with substrate; via pyruvic acid. A Pyruvic acid (Ser); by autocatalysis modification is found at Ser112. The Proton acceptor; for processing activity role is filled by His117. Cys140 acts as the Proton donor; for catalytic activity in catalysis.

The protein belongs to the prokaryotic AdoMetDC family. Type 2 subfamily. In terms of assembly, heterooctamer of four alpha and four beta chains arranged as a tetramer of alpha/beta heterodimers. The cofactor is pyruvate. Post-translationally, is synthesized initially as an inactive proenzyme. Formation of the active enzyme involves a self-maturation process in which the active site pyruvoyl group is generated from an internal serine residue via an autocatalytic post-translational modification. Two non-identical subunits are generated from the proenzyme in this reaction, and the pyruvate is formed at the N-terminus of the alpha chain, which is derived from the carboxyl end of the proenzyme. The post-translation cleavage follows an unusual pathway, termed non-hydrolytic serinolysis, in which the side chain hydroxyl group of the serine supplies its oxygen atom to form the C-terminus of the beta chain, while the remainder of the serine residue undergoes an oxidative deamination to produce ammonia and the pyruvoyl group blocking the N-terminus of the alpha chain.

It carries out the reaction S-adenosyl-L-methionine + H(+) = S-adenosyl 3-(methylsulfanyl)propylamine + CO2. The protein operates within amine and polyamine biosynthesis; S-adenosylmethioninamine biosynthesis; S-adenosylmethioninamine from S-adenosyl-L-methionine: step 1/1. Catalyzes the decarboxylation of S-adenosylmethionine to S-adenosylmethioninamine (dcAdoMet), the propylamine donor required for the synthesis of the polyamines spermine and spermidine from the diamine putrescine. The chain is S-adenosylmethionine decarboxylase proenzyme from Shigella dysenteriae serotype 1 (strain Sd197).